The chain runs to 206 residues: Small ribosomal subunit protein uS4 (206 aa).

Over residues 25–39 (DKLLDRKPNGPGKER) the composition is skewed to basic and acidic residues. Residues 25–49 (DKLLDRKPNGPGKERGARKRGKTSV) form a disordered region. The 63-residue stretch at 95-157 (QRLDNTIYRM…KGIQNLIRHN (63 aa)) folds into the S4 RNA-binding domain.

The protein belongs to the universal ribosomal protein uS4 family. Part of the 30S ribosomal subunit. Contacts protein S5. The interaction surface between S4 and S5 is involved in control of translational fidelity.

One of the primary rRNA binding proteins, it binds directly to 16S rRNA where it nucleates assembly of the body of the 30S subunit. In terms of biological role, with S5 and S12 plays an important role in translational accuracy. In Treponema denticola (strain ATCC 35405 / DSM 14222 / CIP 103919 / JCM 8153 / KCTC 15104), this protein is Small ribosomal subunit protein uS4.